The following is a 61-amino-acid chain: Small ribosomal subunit protein uS14 (61 aa).

Zn(2+)-binding residues include cysteine 24, cysteine 27, cysteine 40, and cysteine 43.

Belongs to the universal ribosomal protein uS14 family. Zinc-binding uS14 subfamily. As to quaternary structure, part of the 30S ribosomal subunit. Contacts proteins S3 and S10. Zn(2+) is required as a cofactor.

In terms of biological role, binds 16S rRNA, required for the assembly of 30S particles and may also be responsible for determining the conformation of the 16S rRNA at the A site. The chain is Small ribosomal subunit protein uS14 from Fervidobacterium nodosum (strain ATCC 35602 / DSM 5306 / Rt17-B1).